The chain runs to 394 residues: Probable malate--CoA ligase subunit beta (394 aa).

An ATP-grasp domain is found at 9–244 (KELLARHGVH…KSQEDPRETF (236 aa)). Positions 46, 99, 102, and 107 each coordinate ATP. Residues Asn-199 and Asp-213 each coordinate Mg(2+).

This sequence belongs to the succinate/malate CoA ligase beta subunit family. In terms of assembly, heterotetramer of two alpha and two beta subunits. The cofactor is Mg(2+).

It catalyses the reaction (S)-malate + ATP + CoA = (S)-malyl-CoA + ADP + phosphate. It functions in the pathway one-carbon metabolism; formaldehyde assimilation via serine pathway. The polypeptide is Probable malate--CoA ligase subunit beta (mtkA) (Mesorhizobium japonicum (strain LMG 29417 / CECT 9101 / MAFF 303099) (Mesorhizobium loti (strain MAFF 303099))).